A 146-amino-acid chain; its full sequence is Hemoglobin subunit beta/beta' (146 aa).

In terms of domain architecture, Globin spans 2 to 146; that stretch reads HWSAEEKQLI…VAHALARKYH (145 aa). The heme b site is built by H63 and H92.

It belongs to the globin family. As to quaternary structure, heterotetramer of two alpha chains and two beta chains. In terms of tissue distribution, red blood cells.

In terms of biological role, involved in oxygen transport from the lung to the various peripheral tissues. This Chroicocephalus ridibundus (Black-headed gull) protein is Hemoglobin subunit beta/beta' (HBB).